Here is a 223-residue protein sequence, read N- to C-terminus: Proteinase inhibitor type-2 TR8 (223 aa).

The signal sequence occupies residues Met1–Ala24. 3 tandem repeats follow at residues Ala24 to Ser81, Lys88 to Ser145, and Glu152 to Ser209. 8 disulfide bridges follow: Cys27–Cys120, Cys31–Cys116, Cys40–Cys126, Cys52–Cys95, Cys55–Cys73, Cys56–Cys91, Cys62–Cys104, and Cys119–Cys137.

It belongs to the protease inhibitor I20 (potato type II proteinase inhibitor) family.

The polypeptide is Proteinase inhibitor type-2 TR8 (ARPI) (Solanum lycopersicum (Tomato)).